The chain runs to 273 residues: 4-hydroxy-tetrahydrodipicolinate reductase (273 aa).

Residues 12-17 (GAGGRM) and Glu-38 each bind NAD(+). Arg-39 provides a ligand contact to NADP(+). Residues 102-104 (GTT) and 126-129 (AANF) each bind NAD(+). His-159 functions as the Proton donor/acceptor in the catalytic mechanism. (S)-2,3,4,5-tetrahydrodipicolinate is bound at residue His-160. The Proton donor role is filled by Lys-163. 169 to 170 (GT) is a binding site for (S)-2,3,4,5-tetrahydrodipicolinate.

The protein belongs to the DapB family. In terms of assembly, homotetramer.

It localises to the cytoplasm. The catalysed reaction is (S)-2,3,4,5-tetrahydrodipicolinate + NAD(+) + H2O = (2S,4S)-4-hydroxy-2,3,4,5-tetrahydrodipicolinate + NADH + H(+). The enzyme catalyses (S)-2,3,4,5-tetrahydrodipicolinate + NADP(+) + H2O = (2S,4S)-4-hydroxy-2,3,4,5-tetrahydrodipicolinate + NADPH + H(+). Its pathway is amino-acid biosynthesis; L-lysine biosynthesis via DAP pathway; (S)-tetrahydrodipicolinate from L-aspartate: step 4/4. Functionally, catalyzes the conversion of 4-hydroxy-tetrahydrodipicolinate (HTPA) to tetrahydrodipicolinate. In Klebsiella pneumoniae (strain 342), this protein is 4-hydroxy-tetrahydrodipicolinate reductase.